Reading from the N-terminus, the 138-residue chain is Large ribosomal subunit protein uL16 (138 aa).

It belongs to the universal ribosomal protein uL16 family. In terms of assembly, part of the 50S ribosomal subunit.

Its function is as follows. Binds 23S rRNA and is also seen to make contacts with the A and possibly P site tRNAs. This is Large ribosomal subunit protein uL16 from Mycoplasmoides gallisepticum (strain R(low / passage 15 / clone 2)) (Mycoplasma gallisepticum).